Reading from the N-terminus, the 594-residue chain is Proteasome-associated ATPase (594 aa).

The span at 1 to 12 (MTETSANKPENT) shows a compositional bias: polar residues. Residues 1-20 (MTETSANKPENTQAHEGRDY) are disordered. A coiled-coil region spans residues 18–71 (RDYSVLERQFNVLRDKLRNVDRQLAAATQNNTKMTTTLQSAKAEILRLKSALEK). Residue 282 to 287 (GCGKTL) participates in ATP binding. The docks into pockets in the proteasome alpha-ring stretch occupies residues 593 to 594 (YL).

It belongs to the AAA ATPase family. Homohexamer. Assembles into a hexameric ring structure that caps the 20S proteasome core. Strongly interacts with the prokaryotic ubiquitin-like protein Pup through a hydrophobic interface; the interacting region of ARC lies in its N-terminal coiled-coil domain. There is one Pup binding site per ARC hexamer ring. Upon ATP-binding, the C-terminus of ARC interacts with the alpha-rings of the proteasome core, possibly by binding to the intersubunit pockets.

It functions in the pathway protein degradation; proteasomal Pup-dependent pathway. Its function is as follows. ATPase which is responsible for recognizing, binding, unfolding and translocation of pupylated proteins into the bacterial 20S proteasome core particle. May be essential for opening the gate of the 20S proteasome via an interaction with its C-terminus, thereby allowing substrate entry and access to the site of proteolysis. Thus, the C-termini of the proteasomal ATPase may function like a 'key in a lock' to induce gate opening and therefore regulate proteolysis. The protein is Proteasome-associated ATPase of Renibacterium salmoninarum (strain ATCC 33209 / DSM 20767 / JCM 11484 / NBRC 15589 / NCIMB 2235).